The primary structure comprises 337 residues: Homeobox protein knotted-1-like 4 (337 aa).

Disordered regions lie at residues methionine 1–glutamate 56 and phenylalanine 159–glutamate 190. Low complexity predominate over residues proline 27–serine 38. The region spanning glutamate 200–leucine 220 is the ELK domain. The segment at residues serine 221 to threonine 284 is a DNA-binding region (homeobox; TALE-type).

The protein belongs to the TALE/KNOX homeobox family.

The protein localises to the nucleus. This is Homeobox protein knotted-1-like 4 (OSH10) from Oryza sativa subsp. japonica (Rice).